The chain runs to 314 residues: Methionyl-tRNA formyltransferase (314 aa).

109 to 112 (SVLP) lines the (6S)-5,6,7,8-tetrahydrofolate pocket.

The protein belongs to the Fmt family.

It carries out the reaction L-methionyl-tRNA(fMet) + (6R)-10-formyltetrahydrofolate = N-formyl-L-methionyl-tRNA(fMet) + (6S)-5,6,7,8-tetrahydrofolate + H(+). Functionally, attaches a formyl group to the free amino group of methionyl-tRNA(fMet). The formyl group appears to play a dual role in the initiator identity of N-formylmethionyl-tRNA by promoting its recognition by IF2 and preventing the misappropriation of this tRNA by the elongation apparatus. This Dictyoglomus turgidum (strain DSM 6724 / Z-1310) protein is Methionyl-tRNA formyltransferase.